The primary structure comprises 191 residues: Putative inactive glutathione hydrolase 4 (191 aa).

Catalysis depends on Thr-54, which acts as the Nucleophile. L-glutamate is bound by residues Thr-72, Asn-74, Glu-93, Asp-96, 126–127, and 147–148; these read SS and GG.

Belongs to the gamma-glutamyltransferase family. In terms of tissue distribution, expressed at low levels in embryo, roots and leaves. In mature plants, expression is restricted to vascular tissues of roots, leaves, flowers and siliques.

The polypeptide is Putative inactive glutathione hydrolase 4 (GGT4) (Arabidopsis thaliana (Mouse-ear cress)).